Reading from the N-terminus, the 280-residue chain is Protease HtpX (280 aa).

2 helical membrane passes run 7–26 and 30–49; these read TFILLASLTALLVVIGGLLG and GMLVALLFAGIMNFSAYWYS. His129 is a Zn(2+) binding site. Glu130 is a catalytic residue. His133 is a binding site for Zn(2+). The next 2 helical transmembrane spans lie at 146–166 and 178–198; these read ATIAGAISGIANMFMWLSMFG and VVGMIMMIVAPLAAGLIQMAI. Glu203 contributes to the Zn(2+) binding site.

It belongs to the peptidase M48B family. Zn(2+) serves as cofactor.

The protein localises to the cell inner membrane. This is Protease HtpX from Legionella pneumophila (strain Corby).